The chain runs to 276 residues: MNNPKTAIQRQFNRSAAGSYDIHADVQRTMAAELAKSIIERNSRGKATEPKILEIGCGTGQFTELLLNQWPHVSITALDLAPAMIHTAEQRFKSRQSANIRFLQADVEIWAVEAPSDSFDLIVSNACFQWLSHPRQTISHLKRFLREGGSLVFTTFGPNTFLELHQAFAEVYHAYGMEPQRHGLSVLSTNQWEEVLAEAGFSTIYCQQDTQKETYASPRDFLRSIKSMGASHSEAIPIDGLSPRKLFNEMYKVYEEKFNMKDGIVATYEWLLIYAG.

The protein belongs to the methyltransferase superfamily.

The enzyme catalyses malonyl-[ACP] + S-adenosyl-L-methionine = malonyl-[ACP] methyl ester + S-adenosyl-L-homocysteine. The protein operates within cofactor biosynthesis; biotin biosynthesis. Functionally, converts the free carboxyl group of a malonyl-thioester to its methyl ester by transfer of a methyl group from S-adenosyl-L-methionine (SAM). It allows to synthesize pimeloyl-ACP via the fatty acid synthetic pathway. This Paenibacillus sp. (strain JDR-2) protein is Malonyl-[acyl-carrier protein] O-methyltransferase.